Reading from the N-terminus, the 107-residue chain is Envelope small membrane protein (107 aa).

Residues 1 to 11 (MMNLVNKSLEE) are Virion surface-facing. A helical membrane pass occupies residues 12–32 (NGSFLTAVYIFCAFVALYLLG). At 33 to 107 (RALHAFVQAA…NFQNDGKLHS (75 aa)) the chain is on the intravirion side.

It belongs to the gammacoronaviruses E protein family. In terms of assembly, homooligomer. Interacts with the M membrane protein in the budding compartment of the host cell, which is located between endoplasmic reticulum and the Golgi complex. The cytoplasmic tails of both proteins are important for this function. Interacts with Nucleoprotein.

The protein localises to the host Golgi apparatus membrane. Functionally, plays a central role in virus morphogenesis and assembly. Acts as a viroporin and self-assembles in host membranes forming pentameric protein-lipid pores that allow ion transport. Also plays a role in the induction of apoptosis. The protein is Envelope small membrane protein of Gallus gallus (Chicken).